The primary structure comprises 521 residues: C-22 sterol desaturase erg5 (521 aa).

Residues 30 to 50 (AVLNGFTFWKALATLFFAAVI) traverse the membrane as a helical segment.

The protein belongs to the cytochrome P450 family. The cofactor is heme.

The protein localises to the endoplasmic reticulum membrane. It carries out the reaction 5-dehydroepisterol + NADPH + O2 + H(+) = ergosta-5,7,22,24(28)-tetraen-3beta-ol + NADP(+) + 2 H2O. The protein operates within steroid metabolism; ergosterol biosynthesis. Functionally, C-22 sterol desaturase; part of the third module of ergosterol biosynthesis pathway that includes the late steps of the pathway. Erg5 converts 5-dehydroepisterol into ergosta-5,7,22,24(28)-tetraen-3beta-ol by forming the C-22(23) double bond in the sterol side chain. The third module or late pathway involves the ergosterol synthesis itself through consecutive reactions that mainly occur in the endoplasmic reticulum (ER) membrane. Firstly, the squalene synthase erg9 catalyzes the condensation of 2 farnesyl pyrophosphate moieties to form squalene, which is the precursor of all steroids. Squalene synthase is crucial for balancing the incorporation of farnesyl diphosphate (FPP) into sterol and nonsterol isoprene synthesis. Secondly, squalene is converted into lanosterol by the consecutive action of the squalene epoxidase erg1 and the lanosterol synthase erg7. Then, the delta(24)-sterol C-methyltransferase erg6 methylates lanosterol at C-24 to produce eburicol. Eburicol is the substrate of the sterol 14-alpha demethylase encoded by cyp51A and cyp51B, to yield 4,4,24-trimethyl ergosta-8,14,24(28)-trienol. The C-14 reductase erg24 then reduces the C14=C15 double bond which leads to 4,4-dimethylfecosterol. A sequence of further demethylations at C-4, involving the C-4 demethylation complex containing the C-4 methylsterol oxidases erg25A or erg25B, the sterol-4-alpha-carboxylate 3-dehydrogenase erg26 and the 3-keto-steroid reductase erg27, leads to the production of fecosterol via 4-methylfecosterol. The C-8 sterol isomerase erg2 then catalyzes the reaction which results in unsaturation at C-7 in the B ring of sterols and thus converts fecosterol to episterol. The sterol-C5-desaturase erg3B then catalyzes the introduction of a C-5 double bond in the B ring to produce 5-dehydroepisterol. The 2 other sterol-C5-desaturases, erg3A and erg3C, seem to be less important in ergosterol biosynthesis. The C-22 sterol desaturase erg5 further converts 5-dehydroepisterol into ergosta-5,7,22,24(28)-tetraen-3beta-ol by forming the C-22(23) double bond in the sterol side chain. Finally, ergosta-5,7,22,24(28)-tetraen-3beta-ol is substrate of the C-24(28) sterol reductases erg4A and erg4B to produce ergosterol. Possible alternative sterol biosynthetic pathways might exist from fecosterol to ergosterol, depending on the activities of the erg3 isoforms. This Aspergillus fumigatus (strain ATCC MYA-4609 / CBS 101355 / FGSC A1100 / Af293) (Neosartorya fumigata) protein is C-22 sterol desaturase erg5.